A 556-amino-acid chain; its full sequence is Dihydroxy-acid dehydratase (556 aa).

Asp-81 is a Mg(2+) binding site. A [2Fe-2S] cluster-binding site is contributed by Cys-122. The Mg(2+) site is built by Asp-123 and Lys-124. The residue at position 124 (Lys-124) is an N6-carboxylysine. Cys-196 provides a ligand contact to [2Fe-2S] cluster. Glu-444 provides a ligand contact to Mg(2+). Ser-470 (proton acceptor) is an active-site residue.

Belongs to the IlvD/Edd family. Homodimer. Requires [2Fe-2S] cluster as cofactor. Mg(2+) serves as cofactor.

It carries out the reaction (2R)-2,3-dihydroxy-3-methylbutanoate = 3-methyl-2-oxobutanoate + H2O. The catalysed reaction is (2R,3R)-2,3-dihydroxy-3-methylpentanoate = (S)-3-methyl-2-oxopentanoate + H2O. Its pathway is amino-acid biosynthesis; L-isoleucine biosynthesis; L-isoleucine from 2-oxobutanoate: step 3/4. It participates in amino-acid biosynthesis; L-valine biosynthesis; L-valine from pyruvate: step 3/4. Its function is as follows. Functions in the biosynthesis of branched-chain amino acids. Catalyzes the dehydration of (2R,3R)-2,3-dihydroxy-3-methylpentanoate (2,3-dihydroxy-3-methylvalerate) into 2-oxo-3-methylpentanoate (2-oxo-3-methylvalerate) and of (2R)-2,3-dihydroxy-3-methylbutanoate (2,3-dihydroxyisovalerate) into 2-oxo-3-methylbutanoate (2-oxoisovalerate), the penultimate precursor to L-isoleucine and L-valine, respectively. The polypeptide is Dihydroxy-acid dehydratase (Syntrophotalea carbinolica (strain DSM 2380 / NBRC 103641 / GraBd1) (Pelobacter carbinolicus)).